A 459-amino-acid polypeptide reads, in one-letter code: Ribosomal protein uS12 methylthiotransferase RimO (459 aa).

Residues 1 to 28 (MSTNPPDLRPDLAPKARLTQPDRPGQPT) form a disordered region. One can recognise an MTTase N-terminal domain in the interval 27-137 (PTIGMVSLGC…VLDAVHAAVP (111 aa)). Residues C36, C72, C101, C168, C172, and C175 each contribute to the [4Fe-4S] cluster site. The Radical SAM core domain maps to 154–387 (LTPRHFSYLK…MAKSQDISEA (234 aa)). One can recognise a TRAM domain in the interval 390 to 457 (AAKVAQRLEV…EYDLWGRLAP (68 aa)).

The protein belongs to the methylthiotransferase family. RimO subfamily. Requires [4Fe-4S] cluster as cofactor.

The protein resides in the cytoplasm. The catalysed reaction is L-aspartate(89)-[ribosomal protein uS12]-hydrogen + (sulfur carrier)-SH + AH2 + 2 S-adenosyl-L-methionine = 3-methylsulfanyl-L-aspartate(89)-[ribosomal protein uS12]-hydrogen + (sulfur carrier)-H + 5'-deoxyadenosine + L-methionine + A + S-adenosyl-L-homocysteine + 2 H(+). Catalyzes the methylthiolation of an aspartic acid residue of ribosomal protein uS12. This chain is Ribosomal protein uS12 methylthiotransferase RimO, found in Roseobacter denitrificans (strain ATCC 33942 / OCh 114) (Erythrobacter sp. (strain OCh 114)).